Here is a 274-residue protein sequence, read N- to C-terminus: HTH-type transcriptional regulator GadX (274 aa).

The 98-residue stretch at 145–242 (TRVCTVINNN…GMTPTEYQER (98 aa)) folds into the HTH araC/xylS-type domain. 2 consecutive DNA-binding regions (H-T-H motif) follow at residues 162 to 183 (ARIA…REEE) and 209 to 232 (IKRV…RNYY).

Homodimer.

Its function is as follows. Positively regulates the expression of about fifteen genes involved in acid resistance such as gadA, gadB and gadC. Depending on the conditions (growth phase and medium), can repress gadW. The chain is HTH-type transcriptional regulator GadX (gadX) from Escherichia coli O157:H7.